The sequence spans 160 residues: Putative flagellin YvzB (160 aa).

Belongs to the bacterial flagellin family. Interacts with FliW.

The protein localises to the bacterial flagellum. The chain is Putative flagellin YvzB (yvzB) from Bacillus subtilis (strain 168).